Reading from the N-terminus, the 345-residue chain is MSTPAYLTKLESIPKEKFLFGPSPISYLPNLTAVLGGKVKLYAKREDCNSGLAYGGNKVRKLEYLVADAKAKGCNTLVSVGGVQSNHTRAVTAVAVASGLKAVTVQEKWVPIDPPLYSETGNILLSRLMGGDVRLNQETFDIRHKKATEDAFKDVEAKGGKPYYIPAGASDHPLGGLGFTNWVVELAKQEKELGVFFDVVIVCSVTGSSHAGTVVGAVAEGRKRKIIGIDASGKPEATRNQVLKIARNTAALLDERLEIKEEDVILDDRFHAGIYGIPDDETIAAMKLAAQTDAFITDPVYEGKSMAGMIRLVKEGAIKEGSNVLYIHLGGQPALNAYSSYFPHA.

N6-(pyridoxal phosphate)lysine is present on Lys-58. Residue Ser-85 is the Nucleophile of the active site.

It belongs to the ACC deaminase/D-cysteine desulfhydrase family. Pyridoxal 5'-phosphate serves as cofactor.

The catalysed reaction is 1-aminocyclopropane-1-carboxylate + H2O = 2-oxobutanoate + NH4(+). Its function is as follows. Catalyzes a cyclopropane ring-opening reaction, the irreversible conversion of 1-aminocyclopropane-1-carboxylate (ACC) to ammonia and alpha-ketobutyrate. This Cryptococcus neoformans var. neoformans serotype D (strain JEC21 / ATCC MYA-565) (Filobasidiella neoformans) protein is Probable 1-aminocyclopropane-1-carboxylate deaminase.